A 68-amino-acid polypeptide reads, in one-letter code: MKTQFAIFLITLVLFQMFSQSDAILQDIWNGIKNLFGKRGLGDHDDLDELFDGEISQADIDFLKEIMQ.

Positions 1–23 (MKTQFAIFLITLVLFQMFSQSDA) are cleaved as a signal peptide. A Phenylalanine amide modification is found at F36. The propeptide occupies 37 to 68 (GKRGLGDHDDLDELFDGEISQADIDFLKEIMQ).

Belongs to the non-disulfide-bridged peptide (NDBP) superfamily. Short antimicrobial peptide (group 4) family. As to expression, expressed by the venom gland.

It localises to the secreted. Its function is as follows. Peptide with unknown function. Does not show antimicrobial activity against the Gram-positive, and Gram-negative bacteria tested, as well as against the fungus C.albicans. This chain is Peptide Smp13, found in Scorpio palmatus (Israeli golden scorpion).